Consider the following 283-residue polypeptide: MTKVLVTGAGGQLGLELCRQLKQAGYEVIALTKKMMNIADQRSVRHSFGHYQPDIVVNSAAFTSVDQCEKELDKAYLINGIGAYYTALESTRIGAQYVHISTDYVFNGKGTQPYREDDPLDPKTIYGKSKRLGEELIRLTTKDSTIIRTSWVYGHGGSNFVETMLKLAETKQELRVVSDQIGSPTYTKDLAEAVIKLFSHPPGIYHVSNSGICSWYEFATAIMEESGLETAILSVTTEEYGNKTPRPAYSVLSHRAIEEAGIRPRHWREALREYLQERSSACD.

The protein belongs to the dTDP-4-dehydrorhamnose reductase family.

It functions in the pathway spore coat biogenesis; spore coat polysaccharide biosynthesis. The chain is Spore coat polysaccharide biosynthesis protein SpsK (spsK) from Bacillus subtilis (strain 168).